An 81-amino-acid polypeptide reads, in one-letter code: uncharacterized protein (81 aa).

It to M.thermoautotrophicum MTH886.

This is an uncharacterized protein from Methanocaldococcus jannaschii (strain ATCC 43067 / DSM 2661 / JAL-1 / JCM 10045 / NBRC 100440) (Methanococcus jannaschii).